Reading from the N-terminus, the 371-residue chain is S-adenosylmethionine:tRNA ribosyltransferase-isomerase (371 aa).

The protein belongs to the QueA family. As to quaternary structure, monomer.

Its subcellular location is the cytoplasm. It carries out the reaction 7-aminomethyl-7-carbaguanosine(34) in tRNA + S-adenosyl-L-methionine = epoxyqueuosine(34) in tRNA + adenine + L-methionine + 2 H(+). Its pathway is tRNA modification; tRNA-queuosine biosynthesis. Its function is as follows. Transfers and isomerizes the ribose moiety from AdoMet to the 7-aminomethyl group of 7-deazaguanine (preQ1-tRNA) to give epoxyqueuosine (oQ-tRNA). The chain is S-adenosylmethionine:tRNA ribosyltransferase-isomerase from Nitratidesulfovibrio vulgaris (strain ATCC 29579 / DSM 644 / CCUG 34227 / NCIMB 8303 / VKM B-1760 / Hildenborough) (Desulfovibrio vulgaris).